The sequence spans 474 residues: Alkylcitrate dehydratase phiI (474 aa).

This sequence belongs to the PrpD family. As to quaternary structure, monomer.

The enzyme catalyses (4E,11E)-2-hydroxytrideca-4,11-dien-1,2,3-tricarboxylate + 2 H(+) = [4-(deca-1,8-diyl)-2,5-dioxo-2,5-dihydro-3-furanyl]acetate + 2 H2O. Its pathway is secondary metabolite biosynthesis. Alkylcitrate dehydratasee; part of the gene cluster that mediates the biosynthesis of the antihypercholesterolemic agents phomoidrides which are dimeric anhydrides. Within the pathway, the alkylcitrate synthase (ACS) tstiJ and the alkylcitrate dehydratase (ACDH) tstI produce the decarboxylated monomeric anhydrides by coupling the C12-fatty acyl product from phiA with oxalacetic acid. The pathway begins with the highly reducing polyketide synthase tstA that catalyzes the formation of a C12-fatty acyl-ACP, starting from one acetate and 5 malonate units. The hydrolase tstM is involved in the release of the C12-fatty acyl chain from phiA. The alkylcitrate synthase (ACS) tstJ and the alkylcitrate dehydratase (ACDH) tstI then give rise to decarboxylated monomeric anhydrides by coupling the C12-fatty acyl chain with oxalacetic acid. The cyclase tstC is responsible for the dimerization of the monomeric anhydrides which leads to the production of prephomoidride that contains the characteristic bicyclo[4.3.1]deca-1,6-diene system of phomoidrides. Iterative oxidation catalyzed by the alpha-ketoglutarate-dependent dioxygenase tstK produced then phomoidride A. Finally, the methyltransferase tstE converts phomoidride A to phomoidride B via an acetalization reaction. The phosphatidylethanolamine-binding protein tstB and tstN are not essential for dimerization and their functions have still to be determined. The protein is Alkylcitrate dehydratase phiI of Talaromyces stipitatus (strain ATCC 10500 / CBS 375.48 / QM 6759 / NRRL 1006) (Penicillium stipitatum).